A 287-amino-acid polypeptide reads, in one-letter code: 2-dehydro-3-deoxyphosphooctonate aldolase (287 aa).

This sequence belongs to the KdsA family.

It is found in the cytoplasm. The catalysed reaction is D-arabinose 5-phosphate + phosphoenolpyruvate + H2O = 3-deoxy-alpha-D-manno-2-octulosonate-8-phosphate + phosphate. The protein operates within carbohydrate biosynthesis; 3-deoxy-D-manno-octulosonate biosynthesis; 3-deoxy-D-manno-octulosonate from D-ribulose 5-phosphate: step 2/3. It functions in the pathway bacterial outer membrane biogenesis; lipopolysaccharide biosynthesis. This is 2-dehydro-3-deoxyphosphooctonate aldolase from Nitrobacter hamburgensis (strain DSM 10229 / NCIMB 13809 / X14).